A 98-amino-acid chain; its full sequence is NADH-ubiquinone oxidoreductase chain 4L (98 aa).

3 helical membrane passes run 1 to 21 (MPSI…GMLV), 29 to 49 (SLLC…LTAL), and 61 to 81 (IILL…LVMV).

Belongs to the complex I subunit 4L family. In terms of assembly, core subunit of respiratory chain NADH dehydrogenase (Complex I) which is composed of 45 different subunits.

Its subcellular location is the mitochondrion inner membrane. The catalysed reaction is a ubiquinone + NADH + 5 H(+)(in) = a ubiquinol + NAD(+) + 4 H(+)(out). Core subunit of the mitochondrial membrane respiratory chain NADH dehydrogenase (Complex I) which catalyzes electron transfer from NADH through the respiratory chain, using ubiquinone as an electron acceptor. Part of the enzyme membrane arm which is embedded in the lipid bilayer and involved in proton translocation. The protein is NADH-ubiquinone oxidoreductase chain 4L (MT-ND4L) of Oryctolagus cuniculus (Rabbit).